The following is a 315-amino-acid chain: Heterodimeric geranylgeranyl pyrophosphate synthase small subunit 1, chloroplastic (315 aa).

Mg(2+)-binding residues include D124 and G130. Positions 228, 265, and 280 each coordinate dimethylallyl diphosphate.

Belongs to the FPP/GGPP synthase family. As to quaternary structure, part of a heterodimeric geranyl(geranyl)diphosphate synthase. The cofactor is Mg(2+). In terms of tissue distribution, mainly expressed in trichomes, and, to a lower extent, in roots, leaves, flowers and stems.

It localises to the plastid. The protein localises to the chloroplast thylakoid membrane. It is found in the chloroplast. In terms of biological role, heterodimeric geranyl(geranyl)-diphosphate (GPP) synthase small subunit. The small subunit alone is inactive in vitro while the large subunit GGPPS1 catalyzes mainly the production of geranygeranyl-diphosphate in vitro. Upon association of the two subunits, the product profile changes and the production of gerany-diphosphate is strongly increased. The polypeptide is Heterodimeric geranylgeranyl pyrophosphate synthase small subunit 1, chloroplastic (Cannabis sativa (Hemp)).